Here is a 300-residue protein sequence, read N- to C-terminus: MTKASVAIVGSGNISTDLLYKLQRSEWLEPRWMIGIDPESEGLARARKLGLETSAEGVDWLLNQPEKPDLVFEATSAYVHREAAPRYEAAGIRAVDLTPAAVGPAVVPPANLREHLGAPNVNMITCGGQATIPIVYAVSRVVDVPYAEIVASVASVSAGPGTRANIDEFTKTTSRGIETIGGAQRGKAIIILNPADPPMIMRDTIFCAIPEDADRAAITDSIHRVVADIQQYVPGYRLLNEPQFDDPSVVSGGQATVTTFVEVEGAGDFLPPYAGNLDIMTAAATKVGEEIAQKLLSVEA.

Residue S11–I14 coordinates NAD(+). The active-site Acyl-thioester intermediate is the C126. NAD(+) is bound by residues S157–N165 and N276.

Belongs to the acetaldehyde dehydrogenase family.

It catalyses the reaction acetaldehyde + NAD(+) + CoA = acetyl-CoA + NADH + H(+). The polypeptide is Acetaldehyde dehydrogenase 3 (hsaG) (Rhodococcus jostii (strain RHA1)).